Consider the following 415-residue polypeptide: Corticotropin-releasing factor receptor 1 (415 aa).

The signal sequence occupies residues Met-1–Ala-23. Residues Ser-24–Lys-111 lie on the Extracellular side of the membrane. Intrachain disulfides connect Cys-30/Cys-54, Cys-44/Cys-87, and Cys-68/Cys-102. N-linked (GlcNAc...) asparagine glycans are attached at residues Asn-38, Asn-45, Asn-51, Asn-78, Asn-90, and Asn-98. Residues His-99–Glu-108 form an important for peptide agonist binding region. The helical transmembrane segment at Ser-112 to Leu-142 threads the bilayer. At Arg-143–Cys-149 the chain is on the cytoplasmic side. A helical transmembrane segment spans residues Val-150–Leu-174. At Thr-175–Arg-189 the chain is on the extracellular side. Cys-188 and Cys-258 are oxidised to a cystine. The helical transmembrane segment at Leu-190–Val-218 threads the bilayer. The Cytoplasmic segment spans residues Leu-219–Arg-225. The helical transmembrane segment at Leu-226 to Tyr-253 threads the bilayer. At Asp-254–Asp-269 the chain is on the extracellular side. A helical transmembrane segment spans residues Tyr-270–Met-295. Residues Leu-280–Ile-290 form an important for antagonist binding region. Residues Thr-296–Thr-306 lie on the Cytoplasmic side of the membrane. The residue at position 301 (Ser-301) is a Phosphoserine; by PKA. A helical transmembrane segment spans residues Ile-307–Phe-331. Residues Val-332–Glu-338 lie on the Extracellular side of the membrane. The helical transmembrane segment at Val-339–Ser-368 threads the bilayer. The Cytoplasmic segment spans residues Glu-369–Val-415.

The protein belongs to the G-protein coupled receptor 2 family. Heterodimer; heterodimerizes with GPER1. Interacts (via N-terminal extracellular domain) with CRH and UCN. Interacts with DLG1; this inhibits endocytosis of CRHR1 after agonist binding. In terms of processing, C-terminal Ser or Thr residues may be phosphorylated. Phosphorylation at Ser-301 by PKA prevents maximal coupling to Gq-protein, and thereby negatively regulates downstream signaling.

The protein localises to the cell membrane. It is found in the endosome. In terms of biological role, G-protein coupled receptor for CRH (corticotropin-releasing factor) and UCN (urocortin). Has high affinity for CRH and UCN. Ligand binding causes a conformation change that triggers signaling via guanine nucleotide-binding proteins (G proteins) and down-stream effectors, such as adenylate cyclase. Promotes the activation of adenylate cyclase, leading to increased intracellular cAMP levels. Inhibits the activity of the calcium channel CACNA1H. Required for normal embryonic development of the adrenal gland and for normal hormonal responses to stress. Plays a role in the response to anxiogenic stimuli. This chain is Corticotropin-releasing factor receptor 1 (CRHR1), found in Ovis aries (Sheep).